A 441-amino-acid polypeptide reads, in one-letter code: Putative cytochrome P450 138 (441 aa).

C388 lines the heme pocket.

Belongs to the cytochrome P450 family. Requires heme as cofactor.

The chain is Putative cytochrome P450 138 (cyp138) from Mycobacterium bovis (strain ATCC BAA-935 / AF2122/97).